We begin with the raw amino-acid sequence, 221 residues long: Lipoprotein-releasing system ATP-binding protein LolD (221 aa).

One can recognise an ABC transporter domain in the interval 6 to 220 (LTLKNVSKHY…YKLKHGALNM (215 aa)). Residue 42 to 49 (GSSGSGKS) participates in ATP binding.

This sequence belongs to the ABC transporter superfamily. Lipoprotein translocase (TC 3.A.1.125) family. As to quaternary structure, the complex is composed of two ATP-binding proteins (LolD) and two transmembrane proteins (LolC and LolE).

The protein resides in the cell inner membrane. Functionally, part of the ABC transporter complex LolCDE involved in the translocation of mature outer membrane-directed lipoproteins, from the inner membrane to the periplasmic chaperone, LolA. Responsible for the formation of the LolA-lipoprotein complex in an ATP-dependent manner. This chain is Lipoprotein-releasing system ATP-binding protein LolD, found in Rickettsia bellii (strain RML369-C).